Consider the following 105-residue polypeptide: MNKIRKGDEVVVIAGRDKGKRGKVNRVQKDGKLVVSGVNMVKRHTKPNPMLGTAGGIVEKEAPIQASNVAIFNSATDKPDRIGFKILEDGKKVRIFKSTNELVDN.

Belongs to the universal ribosomal protein uL24 family. As to quaternary structure, part of the 50S ribosomal subunit.

One of two assembly initiator proteins, it binds directly to the 5'-end of the 23S rRNA, where it nucleates assembly of the 50S subunit. Functionally, one of the proteins that surrounds the polypeptide exit tunnel on the outside of the subunit. In Hahella chejuensis (strain KCTC 2396), this protein is Large ribosomal subunit protein uL24.